Consider the following 343-residue polypeptide: Protein RecA (343 aa).

68 to 75 (GPESGGKT) is a binding site for ATP.

It belongs to the RecA family.

It localises to the cytoplasm. Can catalyze the hydrolysis of ATP in the presence of single-stranded DNA, the ATP-dependent uptake of single-stranded DNA by duplex DNA, and the ATP-dependent hybridization of homologous single-stranded DNAs. It interacts with LexA causing its activation and leading to its autocatalytic cleavage. This chain is Protein RecA, found in Syntrophus aciditrophicus (strain SB).